The following is a 202-amino-acid chain: ATP-dependent Clp protease proteolytic subunit (202 aa).

The Nucleophile role is filled by S101. The active site involves H126.

Belongs to the peptidase S14 family. As to quaternary structure, component of the chloroplastic Clp protease core complex.

The protein resides in the plastid. It localises to the chloroplast stroma. The enzyme catalyses Hydrolysis of proteins to small peptides in the presence of ATP and magnesium. alpha-casein is the usual test substrate. In the absence of ATP, only oligopeptides shorter than five residues are hydrolyzed (such as succinyl-Leu-Tyr-|-NHMec, and Leu-Tyr-Leu-|-Tyr-Trp, in which cleavage of the -Tyr-|-Leu- and -Tyr-|-Trp bonds also occurs).. Functionally, cleaves peptides in various proteins in a process that requires ATP hydrolysis. Has a chymotrypsin-like activity. Plays a major role in the degradation of misfolded proteins. This Buxus microphylla (Littleleaf boxwood) protein is ATP-dependent Clp protease proteolytic subunit.